A 169-amino-acid chain; its full sequence is 2-C-methyl-D-erythritol 2,4-cyclodiphosphate synthase (169 aa).

A divalent metal cation-binding residues include Asp13 and His15. 4-CDP-2-C-methyl-D-erythritol 2-phosphate contacts are provided by residues 13–15 (DIH) and 40–41 (HS). Residue His48 coordinates a divalent metal cation. 4-CDP-2-C-methyl-D-erythritol 2-phosphate-binding positions include 62-64 (DIG), 138-141 (TTNE), and Arg148.

It belongs to the IspF family. Homotrimer. A divalent metal cation is required as a cofactor.

It catalyses the reaction 4-CDP-2-C-methyl-D-erythritol 2-phosphate = 2-C-methyl-D-erythritol 2,4-cyclic diphosphate + CMP. It functions in the pathway isoprenoid biosynthesis; isopentenyl diphosphate biosynthesis via DXP pathway; isopentenyl diphosphate from 1-deoxy-D-xylulose 5-phosphate: step 4/6. In terms of biological role, involved in the biosynthesis of isopentenyl diphosphate (IPP) and dimethylallyl diphosphate (DMAPP), two major building blocks of isoprenoid compounds. Catalyzes the conversion of 4-diphosphocytidyl-2-C-methyl-D-erythritol 2-phosphate (CDP-ME2P) to 2-C-methyl-D-erythritol 2,4-cyclodiphosphate (ME-CPP) with a corresponding release of cytidine 5-monophosphate (CMP). The protein is 2-C-methyl-D-erythritol 2,4-cyclodiphosphate synthase of Akkermansia muciniphila (strain ATCC BAA-835 / DSM 22959 / JCM 33894 / BCRC 81048 / CCUG 64013 / CIP 107961 / Muc).